Here is a 386-residue protein sequence, read N- to C-terminus: Tubulin beta-1 chain (386 aa).

Residues glutamate 7, serine 76, glycine 80, threonine 81, glycine 82, asparagine 142, and asparagine 164 each coordinate GTP. Glutamate 7 serves as a coordination point for Mg(2+). The interval 363-386 (YQDATADEEGEYEDEEEDLQAEDM) is disordered. The segment covering 367–386 (TADEEGEYEDEEEDLQAEDM) has biased composition (acidic residues).

This sequence belongs to the tubulin family. In terms of assembly, dimer of alpha and beta chains. A typical microtubule is a hollow water-filled tube with an outer diameter of 25 nm and an inner diameter of 15 nM. Alpha-beta heterodimers associate head-to-tail to form protofilaments running lengthwise along the microtubule wall with the beta-tubulin subunit facing the microtubule plus end conferring a structural polarity. Microtubules usually have 13 protofilaments but different protofilament numbers can be found in some organisms and specialized cells. It depends on Mg(2+) as a cofactor.

It is found in the cytoplasm. The protein localises to the cytoskeleton. Its function is as follows. Tubulin is the major constituent of microtubules, a cylinder consisting of laterally associated linear protofilaments composed of alpha- and beta-tubulin heterodimers. Microtubules grow by the addition of GTP-tubulin dimers to the microtubule end, where a stabilizing cap forms. Below the cap, tubulin dimers are in GDP-bound state, owing to GTPase activity of alpha-tubulin. In Avena sativa (Oat), this protein is Tubulin beta-1 chain (TUBB1).